The sequence spans 954 residues: Glycine dehydrogenase (decarboxylating) (954 aa).

Lys-704 is modified (N6-(pyridoxal phosphate)lysine).

Belongs to the GcvP family. In terms of assembly, the glycine cleavage system is composed of four proteins: P, T, L and H. It depends on pyridoxal 5'-phosphate as a cofactor.

The catalysed reaction is N(6)-[(R)-lipoyl]-L-lysyl-[glycine-cleavage complex H protein] + glycine + H(+) = N(6)-[(R)-S(8)-aminomethyldihydrolipoyl]-L-lysyl-[glycine-cleavage complex H protein] + CO2. In terms of biological role, the glycine cleavage system catalyzes the degradation of glycine. The P protein binds the alpha-amino group of glycine through its pyridoxal phosphate cofactor; CO(2) is released and the remaining methylamine moiety is then transferred to the lipoamide cofactor of the H protein. This chain is Glycine dehydrogenase (decarboxylating), found in Rhizobium etli (strain ATCC 51251 / DSM 11541 / JCM 21823 / NBRC 15573 / CFN 42).